Consider the following 162-residue polypeptide: Small ribosomal subunit protein uS7m (162 aa).

Belongs to the universal ribosomal protein uS7 family. Part of the small ribosomal subunit.

It is found in the mitochondrion. Functionally, one of the primary rRNA binding proteins, it binds directly to 16S-like rRNA where it nucleates assembly of the head domain of the small subunit. The polypeptide is Small ribosomal subunit protein uS7m (mrps7) (Dictyostelium citrinum (Slime mold)).